We begin with the raw amino-acid sequence, 87 residues long: Phosphoribosyl-ATP pyrophosphatase (87 aa).

It belongs to the PRA-PH family.

It is found in the cytoplasm. It carries out the reaction 1-(5-phospho-beta-D-ribosyl)-ATP + H2O = 1-(5-phospho-beta-D-ribosyl)-5'-AMP + diphosphate + H(+). It functions in the pathway amino-acid biosynthesis; L-histidine biosynthesis; L-histidine from 5-phospho-alpha-D-ribose 1-diphosphate: step 2/9. This chain is Phosphoribosyl-ATP pyrophosphatase, found in Corynebacterium diphtheriae (strain ATCC 700971 / NCTC 13129 / Biotype gravis).